We begin with the raw amino-acid sequence, 209 residues long: MEPLSPYPLKCSSPKAKVFLVFFSMVLCTGILCVLQLKFLRAKGGDFYSYEVTDAKGRTVALSKYRGKASLVVNVASGCPHTEANYRSLQELHREFGPSHFTVLAFPCNQFGESEPGTNKEIEAMAKRNYGVTFPVFSKIKILGSEAEPAYRFLVDSTKKEPRWNFWKYLVDPQGQVVKYWRPDETAESIRPEVASLVRQIIMKKKEDL.

The chain crosses the membrane as a helical span at residues 18–40 (VFLVFFSMVLCTGILCVLQLKFL). Residue cysteine 79 is part of the active site.

It belongs to the glutathione peroxidase family.

It is found in the membrane. The catalysed reaction is 2 glutathione + H2O2 = glutathione disulfide + 2 H2O. The polypeptide is Probable glutathione peroxidase 8-B (gpx8-b) (Xenopus laevis (African clawed frog)).